Reading from the N-terminus, the 309-residue chain is RuBisCO operon transcriptional regulator (309 aa).

One can recognise an HTH lysR-type domain in the interval 6-63; that stretch reads ATLHQLKIFAAVARHMSFARAAEELHLTPPALSIQVRQLAEAVGQPLFDQIGKKIYLT. Residues 23-42 constitute a DNA-binding region (H-T-H motif); the sequence is FARAAEELHLTPPALSIQVR.

This sequence belongs to the LysR transcriptional regulatory family.

Trans-acting transcriptional regulator of RuBisCO genes (rbcL1S1) expression. In Acidithiobacillus ferrooxidans (Thiobacillus ferrooxidans), this protein is RuBisCO operon transcriptional regulator (rbcR).